A 297-amino-acid chain; its full sequence is 4-hydroxy-tetrahydrodipicolinate synthase (297 aa).

Position 47 (threonine 47) interacts with pyruvate. The active-site Proton donor/acceptor is tyrosine 136. Lysine 165 acts as the Schiff-base intermediate with substrate in catalysis. Residue threonine 206 coordinates pyruvate.

Belongs to the DapA family. Homotetramer; dimer of dimers.

It is found in the cytoplasm. The catalysed reaction is L-aspartate 4-semialdehyde + pyruvate = (2S,4S)-4-hydroxy-2,3,4,5-tetrahydrodipicolinate + H2O + H(+). The protein operates within amino-acid biosynthesis; L-lysine biosynthesis via DAP pathway; (S)-tetrahydrodipicolinate from L-aspartate: step 3/4. Its function is as follows. Catalyzes the condensation of (S)-aspartate-beta-semialdehyde [(S)-ASA] and pyruvate to 4-hydroxy-tetrahydrodipicolinate (HTPA). This Sulfurovum sp. (strain NBC37-1) protein is 4-hydroxy-tetrahydrodipicolinate synthase.